The primary structure comprises 256 residues: 1-(5-phosphoribosyl)-5-[(5-phosphoribosylamino)methylideneamino] imidazole-4-carboxamide isomerase (256 aa).

Catalysis depends on Asp-8, which acts as the Proton acceptor. The active-site Proton donor is Asp-129.

Belongs to the HisA/HisF family.

It localises to the cytoplasm. The enzyme catalyses 1-(5-phospho-beta-D-ribosyl)-5-[(5-phospho-beta-D-ribosylamino)methylideneamino]imidazole-4-carboxamide = 5-[(5-phospho-1-deoxy-D-ribulos-1-ylimino)methylamino]-1-(5-phospho-beta-D-ribosyl)imidazole-4-carboxamide. The protein operates within amino-acid biosynthesis; L-histidine biosynthesis; L-histidine from 5-phospho-alpha-D-ribose 1-diphosphate: step 4/9. The chain is 1-(5-phosphoribosyl)-5-[(5-phosphoribosylamino)methylideneamino] imidazole-4-carboxamide isomerase from Prochlorococcus marinus (strain NATL1A).